We begin with the raw amino-acid sequence, 287 residues long: Zinc finger protein SNAI3 (287 aa).

Positions 1–20 are SNAG domain; that stretch reads MPRSFLVKTHSSHRVPNYGK. 4 consecutive C2H2-type zinc fingers follow at residues 147–169, 178–200, 204–226, and 232–254; these read FECI…QQLH, FTCR…IRTH, CICK…IRTH, and YTCS…LQTH. The C2H2-type 5; degenerate zinc finger occupies 260–282; it reads YRCAVCPKAFSRMSLLARHEEAG.

The protein belongs to the snail C2H2-type zinc-finger protein family. Highly expressed in skeletal muscle and thymus. Lower expression in heart, lung and spleen.

Its subcellular location is the nucleus. Its function is as follows. Seems to inhibit myoblast differentiation. Transcriptional repressor of E-box-dependent transactivation of downstream myogenic bHLHs genes. Binds preferentially to the canonical E-box sequences 5'-CAGGTG-3' and 5'-CACCTG-3'. This is Zinc finger protein SNAI3 (Snai3) from Mus musculus (Mouse).